Here is a 104-residue protein sequence, read N- to C-terminus: Pyrimidine/purine nucleoside phosphorylase (104 aa).

It belongs to the nucleoside phosphorylase PpnP family.

It catalyses the reaction a purine D-ribonucleoside + phosphate = a purine nucleobase + alpha-D-ribose 1-phosphate. It carries out the reaction adenosine + phosphate = alpha-D-ribose 1-phosphate + adenine. The enzyme catalyses cytidine + phosphate = cytosine + alpha-D-ribose 1-phosphate. The catalysed reaction is guanosine + phosphate = alpha-D-ribose 1-phosphate + guanine. It catalyses the reaction inosine + phosphate = alpha-D-ribose 1-phosphate + hypoxanthine. It carries out the reaction thymidine + phosphate = 2-deoxy-alpha-D-ribose 1-phosphate + thymine. The enzyme catalyses uridine + phosphate = alpha-D-ribose 1-phosphate + uracil. The catalysed reaction is xanthosine + phosphate = alpha-D-ribose 1-phosphate + xanthine. Functionally, catalyzes the phosphorolysis of diverse nucleosides, yielding D-ribose 1-phosphate and the respective free bases. Can use uridine, adenosine, guanosine, cytidine, thymidine, inosine and xanthosine as substrates. Also catalyzes the reverse reactions. This is Pyrimidine/purine nucleoside phosphorylase from Geobacter metallireducens (strain ATCC 53774 / DSM 7210 / GS-15).